The primary structure comprises 1332 residues: Abscisic-aldehyde oxidase (1332 aa).

One can recognise a 2Fe-2S ferredoxin-type domain in the interval 1–88; the sequence is MDLEFAVNGE…GCSITTSEGL (88 aa). Positions 40, 45, and 48 each coordinate [2Fe-2S] cluster. Residues 219–400 enclose the FAD-binding PCMH-type domain; that stretch reads SDHLKYRWTT…LKVEIPSWTA (182 aa).

This sequence belongs to the xanthine dehydrogenase family. In terms of assembly, aldehyde oxidases (AO) are homodimers and heterodimers of AO subunits. AO-delta is a AAO3 homodimer. AAO3 also forms a dimer with AAO2. Interacts with PUB44, and this interaction probably results in targeting of this protein to the proteasome. The cofactor is [2Fe-2S] cluster. FAD is required as a cofactor. Requires Mo-molybdopterin as cofactor. In terms of tissue distribution, expressed in vascular tissues of all organs, particularly in phloem companion cells and xylem parenchymatic cells. Highly expressed in roots and rosettes, and to lower extent in seedlings, stems and flowers. Expressed at very low levels in siliques and dry seeds. Also detected in root dividing cells (tips and primordia), in mesophyll cells and inside the guard cells.

The protein localises to the cytoplasm. The catalysed reaction is 2-cis-(+)-abscisic aldehyde + O2 + H2O = 2-cis-(+)-abscisate + H2O2 + H(+). The enzyme catalyses 1-naphthaldehyde + O2 + H2O = 1-naphthoate + H2O2 + H(+). It carries out the reaction indole-3-acetaldehyde + O2 + H2O = (indol-3-yl)acetate + H2O2 + H(+). Functionally, in higher plants aldehyde oxidases (AO) appear to be homo- and heterodimeric assemblies of AO subunits with probably different physiological functions. AO-delta may be involved in the last step of abscisic acid biosynthesis, at least in leaves and seeds. In vitro, AO-delta oxidizes abscisic aldehyde to abscisic acid (ABA). In vitro, AO-delta also uses 1-naphthaldehyde, indole-3-aldehyde (IAld), benzaldehyde and cinnamaldehyde as substrate; the AAO2-AAO3 dimer also uses abscisic aldehyde as substrate. The sequence is that of Abscisic-aldehyde oxidase (AAO3) from Arabidopsis thaliana (Mouse-ear cress).